Reading from the N-terminus, the 766-residue chain is Probable serine/threonine-protein kinase KKQ8 (766 aa).

Disordered stretches follow at residues 1-165 (MPEH…DTSS), 201-240 (GHYA…AAQL), 277-297 (SDAN…LDLP), 362-384 (TRSH…DDPS), and 417-437 (AAKN…AGVQ). Positions 14-25 (RSLSLGSSMRSL) are enriched in low complexity. Basic and acidic residues predominate over residues 49–64 (VDIRVDTASASREHTP). Positions 94-120 (LTPTNSNPQSKSGSPVSQNTSQESLIT) are enriched in polar residues. Residues 127-137 (EDYRPSKDSRR) are compositionally biased toward basic and acidic residues. 2 stretches are compositionally biased toward polar residues: residues 140–165 (RNAS…DTSS) and 214–223 (PTSSRVPSRS). The span at 288–297 (SKNDGHLDLP) shows a compositional bias: basic and acidic residues. Positions 372-382 (DSSDDDEELDD) are enriched in acidic residues. Over residues 419–430 (KNKHNQSSKHRT) the composition is skewed to basic residues. The Protein kinase domain occupies 449 to 752 (GKCVAVVGHG…IDKLLQTGWM (304 aa)). Residues 455-463 (VGHGAYGVV) and Lys493 each bind ATP. Asp603 functions as the Proton acceptor in the catalytic mechanism.

Belongs to the protein kinase superfamily. CAMK Ser/Thr protein kinase family. NPR/HAL subfamily. HAL5 sub-subfamily.

It is found in the cytoplasm. The catalysed reaction is L-seryl-[protein] + ATP = O-phospho-L-seryl-[protein] + ADP + H(+). It carries out the reaction L-threonyl-[protein] + ATP = O-phospho-L-threonyl-[protein] + ADP + H(+). This Candida glabrata (strain ATCC 2001 / BCRC 20586 / JCM 3761 / NBRC 0622 / NRRL Y-65 / CBS 138) (Yeast) protein is Probable serine/threonine-protein kinase KKQ8 (KKQ8).